The sequence spans 527 residues: N-acetylglutamate synthase, mitochondrial (527 aa).

Residues 1-39 (MAKVNSGSSGCRAMVMAGQFWTKPFALSSQRSGPHRRSA) constitute a mitochondrion transit peptide. Positions 28 to 65 (SSQRSGPHRRSAAEVNRRMSSSRTAGHGSKTPLWSQQE) are disordered. Positions 40–83 (AEVNRRMSSSRTAGHGSKTPLWSQQESYNHSSLGERSAWSNRTL) are may stabilize the oligomeric structure. The tract at residues 40–361 (AEVNRRMSSS…SGTLFKNGDP (322 aa)) is amino-acid kinase domain (AAK). An N-acetyltransferase domain is found at 360 to 511 (DPIRRYSSLE…FAKSHPDSFC (152 aa)). Substrate contacts are provided by residues K386, K429, and 459–464 (RSRTTN).

Belongs to the acetyltransferase family. As to quaternary structure, homodimer. Homotetramer.

The protein resides in the mitochondrion matrix. It catalyses the reaction L-glutamate + acetyl-CoA = N-acetyl-L-glutamate + CoA + H(+). Its activity is regulated as follows. Inhibited by L-arginine. Its function is as follows. Plays a role in the regulation of ureagenesis by producing the essential cofactor N-acetylglutamate (NAG), thus modulating carbamoylphosphate synthase I (cps1) activity. This Danio rerio (Zebrafish) protein is N-acetylglutamate synthase, mitochondrial.